The primary structure comprises 296 residues: Biliverdin reductase A (296 aa).

The propeptide occupies Met-1–Asn-2. NADP(+) contacts are provided by residues Val-16–Ala-19, Ser-44–Arg-46, Ser-77–His-80, and Tyr-98. Residue Thr-174 is modified to Phosphothreonine. A phosphoserine mark is found at Ser-178 and Ser-230. N6-acetyllysine is present on residues Lys-248 and Lys-253. Residues His-280, Cys-281, Cys-292, and Cys-293 each coordinate Zn(2+).

Belongs to the Gfo/Idh/MocA family. Biliverdin reductase subfamily. In terms of assembly, monomer. The cofactor is Zn(2+). Liver.

It is found in the cytoplasm. The protein resides in the cytosol. It carries out the reaction (4Z,15Z)-bilirubin IXalpha + NAD(+) = biliverdin IXalpha + NADH + H(+). It catalyses the reaction (4Z,15Z)-bilirubin IXalpha + NADP(+) = biliverdin IXalpha + NADPH + H(+). It participates in porphyrin-containing compound metabolism; protoheme degradation. In terms of biological role, reduces the gamma-methene bridge of the open tetrapyrrole, biliverdin IXalpha, to bilirubin with the concomitant oxidation of a NADH or NADPH cofactor. Does not reduce bilirubin IXbeta. Uses the reactants NADH or NADPH depending on the pH; NADH is used at the acidic pH range (6-6.9) and NADPH at the alkaline range (8.5-8.7). NADPH, however, is the probable reactant in biological systems. This Homo sapiens (Human) protein is Biliverdin reductase A.